Reading from the N-terminus, the 479-residue chain is Anaerobic nitric oxide reductase flavorubredoxin (479 aa).

The segment at 30–210 (LRGSSYNSYL…PFSRLVTPKI (181 aa)) is zinc metallo-hydrolase. Residues histidine 79, glutamate 81, aspartate 83, histidine 147, aspartate 166, and histidine 227 each contribute to the Fe cation site. In terms of domain architecture, Flavodoxin-like spans 254–393 (ITIVYDTMSN…LCREHGREIA (140 aa)). Residues 260 to 264 (TMSNN) and 342 to 369 (AFGS…EMSL) contribute to the FMN site. Positions 423 to 474 (GPRMQCSVCQWIYDPAKGEPMQDVAPGTPWSEVPDNFLCPECSLGKDVFDEL) constitute a Rubredoxin-like domain. 4 residues coordinate Fe cation: cysteine 428, cysteine 431, cysteine 461, and cysteine 464.

The protein in the N-terminal section; belongs to the zinc metallo-hydrolase group 3 family. In terms of assembly, homotetramer. Fe cation serves as cofactor. Requires FMN as cofactor.

It is found in the cytoplasm. Its pathway is nitrogen metabolism; nitric oxide reduction. Its function is as follows. Anaerobic nitric oxide reductase; uses NADH to detoxify nitric oxide (NO), protecting several 4Fe-4S NO-sensitive enzymes. Has at least 2 reductase partners, only one of which (NorW, flavorubredoxin reductase) has been identified. NO probably binds to the di-iron center; electrons enter from the NorW at rubredoxin and are transferred sequentially to the FMN center and the di-iron center. Also able to function as an aerobic oxygen reductase. The protein is Anaerobic nitric oxide reductase flavorubredoxin of Escherichia coli (strain UTI89 / UPEC).